A 192-amino-acid polypeptide reads, in one-letter code: Imidazoleglycerol-phosphate dehydratase (192 aa).

This sequence belongs to the imidazoleglycerol-phosphate dehydratase family.

The protein resides in the cytoplasm. It carries out the reaction D-erythro-1-(imidazol-4-yl)glycerol 3-phosphate = 3-(imidazol-4-yl)-2-oxopropyl phosphate + H2O. It functions in the pathway amino-acid biosynthesis; L-histidine biosynthesis; L-histidine from 5-phospho-alpha-D-ribose 1-diphosphate: step 6/9. In Staphylococcus saprophyticus subsp. saprophyticus (strain ATCC 15305 / DSM 20229 / NCIMB 8711 / NCTC 7292 / S-41), this protein is Imidazoleglycerol-phosphate dehydratase.